Here is a 352-residue protein sequence, read N- to C-terminus: S-adenosylmethionine:tRNA ribosyltransferase-isomerase (352 aa).

It belongs to the QueA family. As to quaternary structure, monomer.

Its subcellular location is the cytoplasm. It catalyses the reaction 7-aminomethyl-7-carbaguanosine(34) in tRNA + S-adenosyl-L-methionine = epoxyqueuosine(34) in tRNA + adenine + L-methionine + 2 H(+). It participates in tRNA modification; tRNA-queuosine biosynthesis. In terms of biological role, transfers and isomerizes the ribose moiety from AdoMet to the 7-aminomethyl group of 7-deazaguanine (preQ1-tRNA) to give epoxyqueuosine (oQ-tRNA). This chain is S-adenosylmethionine:tRNA ribosyltransferase-isomerase, found in Cupriavidus necator (strain ATCC 17699 / DSM 428 / KCTC 22496 / NCIMB 10442 / H16 / Stanier 337) (Ralstonia eutropha).